Here is a 508-residue protein sequence, read N- to C-terminus: Photosystem II CP47 reaction center protein (508 aa).

A run of 6 helical transmembrane segments spans residues 21–36 (SVHI…WAGS), 101–115 (IILA…MWHW), 140–156 (GIHL…FGAF), 203–218 (IAAG…FHLS), 237–252 (VLSS…AFVV), and 457–472 (CFAL…HGAR).

This sequence belongs to the PsbB/PsbC family. PsbB subfamily. In terms of assembly, PSII is composed of 1 copy each of membrane proteins PsbA, PsbB, PsbC, PsbD, PsbE, PsbF, PsbH, PsbI, PsbJ, PsbK, PsbL, PsbM, PsbT, PsbX, PsbY, PsbZ, Psb30/Ycf12, at least 3 peripheral proteins of the oxygen-evolving complex and a large number of cofactors. It forms dimeric complexes. It depends on Binds multiple chlorophylls. PSII binds additional chlorophylls, carotenoids and specific lipids. as a cofactor.

Its subcellular location is the plastid. It localises to the chloroplast thylakoid membrane. Its function is as follows. One of the components of the core complex of photosystem II (PSII). It binds chlorophyll and helps catalyze the primary light-induced photochemical processes of PSII. PSII is a light-driven water:plastoquinone oxidoreductase, using light energy to abstract electrons from H(2)O, generating O(2) and a proton gradient subsequently used for ATP formation. The polypeptide is Photosystem II CP47 reaction center protein (Mesostigma viride (Green alga)).